The primary structure comprises 187 residues: NADPH-dependent 3-demethoxyubiquinone 3-hydroxylase, mitochondrial (187 aa).

The N-terminal 8 residues, 1–8 (MFRVITRG), are a transit peptide targeting the mitochondrion. Lysine 21 is an NADH binding site. A run of 2 repeats spans residues 28 to 99 (AGEL…SALL) and 100 to 187 (GKEG…AEKI). A 2 X approximate tandem repeats region spans residues 28 to 187 (AGELGADRIY…KGAIAIAEKI (160 aa)). Residues glutamate 30, glutamate 60, histidine 63, glutamate 112, glutamate 148, and histidine 151 each coordinate Fe cation. Lysine 186 contributes to the NADH binding site.

It belongs to the COQ7 family. In terms of assembly, component of a multi-subunit COQ enzyme complex. Requires Fe cation as cofactor.

The protein resides in the mitochondrion inner membrane. It is found in the mitochondrion. Its subcellular location is the nucleus. It carries out the reaction a 5-methoxy-2-methyl-3-(all-trans-polyprenyl)benzoquinone + NADH + O2 = a 3-demethylubiquinone + NAD(+) + H2O. Its pathway is cofactor biosynthesis; ubiquinone biosynthesis. Its function is as follows. Catalyzes the hydroxylation of the 5-methoxy-2-methyl-3-(all-trans-polyprenyl)benzoquinone at the C6 position and participates in the biosynthesis of ubiquinone. Catalyzes the reaction through a substrate-mediated reduction pathway, whereby NADH shuttles electrons to 5-methoxy-2-methyl-3-(all-trans-decaprenyl)benzoquinone, which then transfers the electrons to the two Fe(3+) centers. The binding of 5-methoxy-2-methyl-3-(all-trans-polyprenyl)benzoquinone (DMQn) mediates reduction of the diiron center by nicotinamide adenine dinucleotide (NADH) and initiates oxygen activation for subsequent DMQ hydroxylation. Also has a structural role in the COQ enzyme complex, stabilizing other COQ polypeptides. Involved in lifespan determination in a ubiquinone-independent manner. Plays a role in modulating mitochondrial stress responses, acting in the nucleus, perhaps via regulating gene expression, independent of its characterized mitochondrial function in ubiquinone biosynthesis. Plays a role in modulating polyribosome formation. The polypeptide is NADPH-dependent 3-demethoxyubiquinone 3-hydroxylase, mitochondrial (Caenorhabditis elegans).